Consider the following 170-residue polypeptide: NADH-quinone oxidoreductase subunit B (170 aa).

[4Fe-4S] cluster is bound by residues Cys37, Cys38, Cys102, and Cys131.

Belongs to the complex I 20 kDa subunit family. In terms of assembly, NDH-1 is composed of 14 different subunits. Subunits NuoB, C, D, E, F, and G constitute the peripheral sector of the complex. [4Fe-4S] cluster is required as a cofactor.

The protein resides in the cell inner membrane. The catalysed reaction is a quinone + NADH + 5 H(+)(in) = a quinol + NAD(+) + 4 H(+)(out). Its function is as follows. NDH-1 shuttles electrons from NADH, via FMN and iron-sulfur (Fe-S) centers, to quinones in the respiratory chain. The immediate electron acceptor for the enzyme in this species is believed to be ubiquinone. Couples the redox reaction to proton translocation (for every two electrons transferred, four hydrogen ions are translocated across the cytoplasmic membrane), and thus conserves the redox energy in a proton gradient. The sequence is that of NADH-quinone oxidoreductase subunit B from Geotalea uraniireducens (strain Rf4) (Geobacter uraniireducens).